Consider the following 998-residue polypeptide: Ephrin type-B receptor 3 (998 aa).

Positions 1 to 33 (MARARPPPPPSPPPGLLPLLPPLLLLPLLLLPA) are cleaved as a signal peptide. Over 34–559 (GCRALEETLM…AQQLQEQLPL (526 aa)) the chain is Extracellular. Residues 39-217 (EETLMDTKWV…FYKKCASTTA (179 aa)) form the Eph LBD domain. An intrachain disulfide couples cysteine 81 to cysteine 199. 2 Fibronectin type-III domains span residues 339–451 (VPSP…TNQA) and 452–545 (APSE…TTSE). 2 N-linked (GlcNAc...) asparagine glycosylation sites follow: asparagine 351 and asparagine 445. A helical membrane pass occupies residues 560 to 580 (IVGSATAGLVFVVAVVVIAIV). Over 581-998 (CLRKQRHGSD…QMNQTLPVQV (418 aa)) the chain is Cytoplasmic. Tyrosine 614 is subject to Phosphotyrosine; by autocatalysis. Residues 633 to 896 (VKIEEVIGAG…QIVNTLDKLI (264 aa)) enclose the Protein kinase domain. ATP contacts are provided by residues 639-647 (IGAGEFGEV) and lysine 665. Aspartate 758 acts as the Proton acceptor in catalysis. Residues 925–989 (TTFTTVGDWL…LSSIQDMRLQ (65 aa)) form the SAM domain. The short motif at 996 to 998 (VQV) is the PDZ-binding element.

This sequence belongs to the protein kinase superfamily. Tyr protein kinase family. Ephrin receptor subfamily. In terms of assembly, heterotetramer upon binding of the ligand. The heterotetramer is composed of an ephrin dimer and a receptor dimer. Oligomerization is probably required to induce biological responses. Phosphorylated. Autophosphorylates upon ligand-binding. Autophosphorylation on Tyr-614 is required for interaction with SH2 domain-containing proteins. Post-translationally, ubiquitinated by RNF186, mainly through 'Lys-48' and 'Lys-63'-linked polyubiquitin chains. Ubiquitous.

It localises to the cell membrane. The protein resides in the cell projection. Its subcellular location is the dendrite. The catalysed reaction is L-tyrosyl-[protein] + ATP = O-phospho-L-tyrosyl-[protein] + ADP + H(+). Its function is as follows. Receptor tyrosine kinase which binds promiscuously transmembrane ephrin-B family ligands residing on adjacent cells, leading to contact-dependent bidirectional signaling into neighboring cells. The signaling pathway downstream of the receptor is referred to as forward signaling while the signaling pathway downstream of the ephrin ligand is referred to as reverse signaling. Generally has an overlapping and redundant function with EPHB2. Like EPHB2, functions in axon guidance during development regulating for instance the neurons forming the corpus callosum and the anterior commissure, 2 major interhemispheric connections between the temporal lobes of the cerebral cortex. In addition to its role in axon guidance also plays an important redundant role with other ephrin-B receptors in development and maturation of dendritic spines and the formation of excitatory synapses. Controls other aspects of development through regulation of cell migration and positioning. This includes angiogenesis, palate development and thymic epithelium development for instance. Forward and reverse signaling through the EFNB2/EPHB3 complex also regulate migration and adhesion of cells that tubularize the urethra and septate the cloaca. Finally, plays an important role in intestinal epithelium differentiation segregating progenitor from differentiated cells in the crypt. This Homo sapiens (Human) protein is Ephrin type-B receptor 3 (EPHB3).